Consider the following 401-residue polypeptide: Enoyl-[acyl-carrier-protein] reductase [NADH] (401 aa).

NAD(+)-binding positions include 48-53 (GASSGY), 74-75 (FE), 111-112 (DA), and 140-141 (LA). Tyr-226 contacts substrate. The active-site Proton donor is the Tyr-236. NAD(+) is bound by residues Lys-245 and 274 to 276 (VVT).

The protein belongs to the TER reductase family. As to quaternary structure, monomer.

The enzyme catalyses a 2,3-saturated acyl-[ACP] + NAD(+) = a (2E)-enoyl-[ACP] + NADH + H(+). It functions in the pathway lipid metabolism; fatty acid biosynthesis. Involved in the final reduction of the elongation cycle of fatty acid synthesis (FAS II). Catalyzes the reduction of a carbon-carbon double bond in an enoyl moiety that is covalently linked to an acyl carrier protein (ACP). This Xylella fastidiosa (strain 9a5c) protein is Enoyl-[acyl-carrier-protein] reductase [NADH].